A 445-amino-acid polypeptide reads, in one-letter code: UPF0210 protein SZO_15840 (445 aa).

Belongs to the UPF0210 family. As to quaternary structure, homodimer.

In Streptococcus equi subsp. zooepidemicus (strain H70), this protein is UPF0210 protein SZO_15840.